A 139-amino-acid polypeptide reads, in one-letter code: Large-conductance mechanosensitive channel (139 aa).

Transmembrane regions (helical) follow at residues 9–29 and 79–99; these read AFAV…GAAF and IQTV…VKAI.

The protein belongs to the MscL family. As to quaternary structure, homopentamer.

Its subcellular location is the cell inner membrane. In terms of biological role, channel that opens in response to stretch forces in the membrane lipid bilayer. May participate in the regulation of osmotic pressure changes within the cell. The protein is Large-conductance mechanosensitive channel of Pseudomonas putida (strain ATCC 47054 / DSM 6125 / CFBP 8728 / NCIMB 11950 / KT2440).